The primary structure comprises 21 residues: Fibrinogen beta chain (21 aa).

Gln1 is modified (pyrrolidone carboxylic acid). A Sulfotyrosine modification is found at Tyr6.

Heterohexamer; disulfide linked. Contains 2 sets of 3 non-identical chains (alpha, beta and gamma). The 2 heterotrimers are in head to head conformation with the N-termini in a small central domain. Conversion of fibrinogen to fibrin is triggered by thrombin, which cleaves fibrinopeptides A and B from alpha and beta chains, and thus exposes the N-terminal polymerization sites responsible for the formation of the soft clot.

The protein localises to the secreted. Functionally, cleaved by the protease thrombin to yield monomers which, together with fibrinogen alpha (FGA) and fibrinogen gamma (FGG), polymerize to form an insoluble fibrin matrix. Fibrin has a major function in hemostasis as one of the primary components of blood clots. In addition, functions during the early stages of wound repair to stabilize the lesion and guide cell migration during re-epithelialization. Was originally thought to be essential for platelet aggregation, based on in vitro studies using anticoagulated blood. However subsequent studies have shown that it is not absolutely required for thrombus formation in vivo. Enhances expression of SELP in activated platelets. Maternal fibrinogen is essential for successful pregnancy. Fibrin deposition is also associated with infection, where it protects against IFNG-mediated hemorrhage. May also facilitate the antibacterial immune response via both innate and T-cell mediated pathways. The sequence is that of Fibrinogen beta chain (FGB) from Rangifer tarandus (Reindeer).